Consider the following 169-residue polypeptide: Putative phosphoesterase SACOL1020 (169 aa).

His-34 (proton donor) is an active-site residue. Short sequence motifs (HXTX) lie at residues 34 to 37 and 115 to 118; these read HVTI and HFTI. His-115 (proton acceptor) is an active-site residue.

This sequence belongs to the 2H phosphoesterase superfamily. YjcG family.

The protein is Putative phosphoesterase SACOL1020 of Staphylococcus aureus (strain COL).